The sequence spans 391 residues: Ferrochelatase (391 aa).

2 residues coordinate Fe cation: His-196 and Glu-281.

It belongs to the ferrochelatase family.

The protein localises to the cytoplasm. It catalyses the reaction heme b + 2 H(+) = protoporphyrin IX + Fe(2+). Its pathway is porphyrin-containing compound metabolism; protoheme biosynthesis; protoheme from protoporphyrin-IX: step 1/1. Its function is as follows. Catalyzes the ferrous insertion into protoporphyrin IX. In Parasynechococcus marenigrum (strain WH8102), this protein is Ferrochelatase.